We begin with the raw amino-acid sequence, 141 residues long: ATP synthase epsilon chain (141 aa).

Belongs to the ATPase epsilon chain family. In terms of assembly, F-type ATPases have 2 components, CF(1) - the catalytic core - and CF(0) - the membrane proton channel. CF(1) has five subunits: alpha(3), beta(3), gamma(1), delta(1), epsilon(1). CF(0) has three main subunits: a, b and c.

Its subcellular location is the cell inner membrane. In terms of biological role, produces ATP from ADP in the presence of a proton gradient across the membrane. The protein is ATP synthase epsilon chain of Bordetella avium (strain 197N).